Reading from the N-terminus, the 147-residue chain is Nucleoside diphosphate kinase (147 aa).

Positions 11, 59, 87, 93, 104, and 114 each coordinate ATP. Catalysis depends on histidine 117, which acts as the Pros-phosphohistidine intermediate.

The protein belongs to the NDK family. As to quaternary structure, homotetramer. Mg(2+) is required as a cofactor.

The protein localises to the cytoplasm. The catalysed reaction is a 2'-deoxyribonucleoside 5'-diphosphate + ATP = a 2'-deoxyribonucleoside 5'-triphosphate + ADP. The enzyme catalyses a ribonucleoside 5'-diphosphate + ATP = a ribonucleoside 5'-triphosphate + ADP. In terms of biological role, major role in the synthesis of nucleoside triphosphates other than ATP. The ATP gamma phosphate is transferred to the NDP beta phosphate via a ping-pong mechanism, using a phosphorylated active-site intermediate. The protein is Nucleoside diphosphate kinase of Anaeromyxobacter dehalogenans (strain 2CP-C).